The following is a 177-amino-acid chain: ATP synthase subunit delta (177 aa).

It belongs to the ATPase delta chain family. F-type ATPases have 2 components, F(1) - the catalytic core - and F(0) - the membrane proton channel. F(1) has five subunits: alpha(3), beta(3), gamma(1), delta(1), epsilon(1). F(0) has three main subunits: a(1), b(2) and c(10-14). The alpha and beta chains form an alternating ring which encloses part of the gamma chain. F(1) is attached to F(0) by a central stalk formed by the gamma and epsilon chains, while a peripheral stalk is formed by the delta and b chains.

The protein resides in the cell inner membrane. Functionally, f(1)F(0) ATP synthase produces ATP from ADP in the presence of a proton or sodium gradient. F-type ATPases consist of two structural domains, F(1) containing the extramembraneous catalytic core and F(0) containing the membrane proton channel, linked together by a central stalk and a peripheral stalk. During catalysis, ATP synthesis in the catalytic domain of F(1) is coupled via a rotary mechanism of the central stalk subunits to proton translocation. In terms of biological role, this protein is part of the stalk that links CF(0) to CF(1). It either transmits conformational changes from CF(0) to CF(1) or is implicated in proton conduction. This is ATP synthase subunit delta from Tolumonas auensis (strain DSM 9187 / NBRC 110442 / TA 4).